The chain runs to 47 residues: PhoP/PhoQ regulator MgrB (47 aa).

Residues 6–26 (WVLLIVIIAGCLLLWTQMLNV) traverse the membrane as a helical segment.

It belongs to the MgrB family. May form homooligomers. Probably interacts with the periplasmic domain of PhoQ.

It is found in the cell inner membrane. Functionally, phoP-regulated transcription is redox-sensitive, being activated when the periplasm becomes more reducing. MgrB acts between DsbA/DsbB and PhoP/PhoQ in this pathway. Represses PhoP/PhoQ signaling, possibly by binding to the periplasmic domain of PhoQ, altering its activity and that of downstream effector PhoP. The protein is PhoP/PhoQ regulator MgrB of Klebsiella pneumoniae (strain 342).